Reading from the N-terminus, the 337-residue chain is Transaldolase (337 aa).

A Nuclear localization signal motif is present at residues 1-10 (MSGSPVKRQR). The residue at position 115 (Lys115) is an N6-acetyllysine. The Schiff-base intermediate with substrate role is filled by Lys142. The residue at position 219 (Lys219) is an N6-acetyllysine. A phosphoserine mark is found at Ser237 and Ser256. An N6-acetyllysine mark is found at Lys269, Lys286, and Lys321.

It belongs to the transaldolase family. Type 1 subfamily. As to quaternary structure, homodimer. Interacts with KPNA1 and KPNA4.

The protein localises to the nucleus. It is found in the cytoplasm. It catalyses the reaction D-sedoheptulose 7-phosphate + D-glyceraldehyde 3-phosphate = D-erythrose 4-phosphate + beta-D-fructose 6-phosphate. Its pathway is carbohydrate degradation; pentose phosphate pathway; D-glyceraldehyde 3-phosphate and beta-D-fructose 6-phosphate from D-ribose 5-phosphate and D-xylulose 5-phosphate (non-oxidative stage): step 2/3. Catalyzes the rate-limiting step of the non-oxidative phase in the pentose phosphate pathway. Catalyzes the reversible conversion of sedheptulose-7-phosphate and D-glyceraldehyde 3-phosphate into erythrose-4-phosphate and beta-D-fructose 6-phosphate. The sequence is that of Transaldolase (Taldo1) from Rattus norvegicus (Rat).